A 607-amino-acid polypeptide reads, in one-letter code: Glutamine--fructose-6-phosphate aminotransferase [isomerizing] (607 aa).

Cys2 functions as the Nucleophile; for GATase activity in the catalytic mechanism. One can recognise a Glutamine amidotransferase type-2 domain in the interval Cys2–Asn217. 2 SIS domains span residues Ile283 to Ala422 and Val455 to Pro597. Catalysis depends on Lys602, which acts as the For Fru-6P isomerization activity.

In terms of assembly, homodimer.

Its subcellular location is the cytoplasm. It carries out the reaction D-fructose 6-phosphate + L-glutamine = D-glucosamine 6-phosphate + L-glutamate. Its function is as follows. Catalyzes the first step in hexosamine metabolism, converting fructose-6P into glucosamine-6P using glutamine as a nitrogen source. The sequence is that of Glutamine--fructose-6-phosphate aminotransferase [isomerizing] from Brucella suis biovar 1 (strain 1330).